Reading from the N-terminus, the 165-residue chain is 6,7-dimethyl-8-ribityllumazine synthase 2 (165 aa).

5-amino-6-(D-ribitylamino)uracil is bound by residues W24, 56 to 58, and 80 to 82; these read SFE and LVV. The active-site Proton donor is R88. 5-amino-6-(D-ribitylamino)uracil is bound at residue S113. Residue H127 coordinates (2S)-2-hydroxy-3-oxobutyl phosphate.

It belongs to the DMRL synthase family.

The enzyme catalyses (2S)-2-hydroxy-3-oxobutyl phosphate + 5-amino-6-(D-ribitylamino)uracil = 6,7-dimethyl-8-(1-D-ribityl)lumazine + phosphate + 2 H2O + H(+). It functions in the pathway cofactor biosynthesis; riboflavin biosynthesis; riboflavin from 2-hydroxy-3-oxobutyl phosphate and 5-amino-6-(D-ribitylamino)uracil: step 1/2. Catalyzes the formation of 6,7-dimethyl-8-ribityllumazine by condensation of 5-amino-6-(D-ribitylamino)uracil with 3,4-dihydroxy-2-butanone 4-phosphate. This is the penultimate step in the biosynthesis of riboflavin. The polypeptide is 6,7-dimethyl-8-ribityllumazine synthase 2 (Bradyrhizobium diazoefficiens (strain JCM 10833 / BCRC 13528 / IAM 13628 / NBRC 14792 / USDA 110)).